We begin with the raw amino-acid sequence, 631 residues long: E3 ubiquitin-protein ligase Zswim2 (631 aa).

The segment at 54–87 (FRVLLGNPHECSCPTFLKRGELCKHICWVLLKKF) adopts an SWIM-type zinc-finger fold. The segment at 139–348 (KDINAGDICP…APGYQCRLCL (210 aa)) is UBE2D1-binding. An RING-type 1 zinc finger spans residues 147–199 (CPICQEVLLEKKLPVTFCRFGCGNNVHIKCMRILANYQDTGSDSSVLRCPLCR). The ZZ-type zinc-finger motif lies at 230-281 (HLGIPCNNCNQLPIEGRCYKCTECVEYHLCQECFDSCCHSSHAFASREKRNQ). The Zn(2+) site is built by Cys-235, Cys-238, Cys-250, Cys-253, Cys-259, Cys-262, His-268, and His-271. The RING-type 2 zinc-finger motif lies at 344 to 386 (CRLCLKSFSFGQYTRLLPCTHKFHRKCIDNWLLHKCNSCPIDR). The disordered stretch occupies residues 589–614 (SKRQNNSMGKVRQKLGHPPRRPAYPP). Over residues 599-608 (VRQKLGHPPR) the composition is skewed to basic residues.

As to quaternary structure, dimer. Interacts with UBE2D1. Polyubiquitinated. Polyubiquitination is followed by degradation via the proteasome. Expressed only in testis.

The enzyme catalyses S-ubiquitinyl-[E2 ubiquitin-conjugating enzyme]-L-cysteine + [acceptor protein]-L-lysine = [E2 ubiquitin-conjugating enzyme]-L-cysteine + N(6)-ubiquitinyl-[acceptor protein]-L-lysine.. Its function is as follows. E3 ubiquitin-protein ligase involved in the regulation of Fas-, DR3- and DR4-mediated apoptosis. Functions in conjunction with the UBE2D1, UBE2D3 and UBE2E1 E2 ubiquitin-conjugating enzymes. The chain is E3 ubiquitin-protein ligase Zswim2 (Zswim2) from Mus musculus (Mouse).